The primary structure comprises 413 residues: cAMP-dependent protein kinase regulatory subunit (413 aa).

Positions 1–145 (MADSSSFPGT…DSWTPPCHPK (145 aa)) are disordered. The interval 24-161 (SPIQKISEEE…RLKTAVSNNF (138 aa)) is dimerization and phosphorylation. A compositionally biased stretch (low complexity) spans 58–67 (GNSFNGDNGS). Over residues 121–138 (TSVSAESLNPTSAGSDSW) the composition is skewed to polar residues. Ser122 is modified (phosphoserine). Residues 162-291 (LFSH…FLEE), Glu240, Arg249, 294-413 (LLSS…PSPS), Glu361, and Arg370 contribute to the 3',5'-cyclic AMP site.

The protein belongs to the cAMP-dependent kinase regulatory chain family. Tetramer, composed of 2 regulatory (R) and 2 catalytic (C) subunits. In the presence of cAMP it dissociates into 2 active monomeric C subunits and an R dimer.

In Aspergillus fumigatus (strain ATCC MYA-4609 / CBS 101355 / FGSC A1100 / Af293) (Neosartorya fumigata), this protein is cAMP-dependent protein kinase regulatory subunit (pkaR).